Reading from the N-terminus, the 158-residue chain is NAD(P)H-quinone oxidoreductase subunit N (158 aa).

It belongs to the complex I NdhN subunit family. As to quaternary structure, NDH-1 can be composed of about 15 different subunits; different subcomplexes with different compositions have been identified which probably have different functions.

It localises to the cellular thylakoid membrane. The enzyme catalyses a plastoquinone + NADH + (n+1) H(+)(in) = a plastoquinol + NAD(+) + n H(+)(out). It carries out the reaction a plastoquinone + NADPH + (n+1) H(+)(in) = a plastoquinol + NADP(+) + n H(+)(out). NDH-1 shuttles electrons from an unknown electron donor, via FMN and iron-sulfur (Fe-S) centers, to quinones in the respiratory and/or the photosynthetic chain. The immediate electron acceptor for the enzyme in this species is believed to be plastoquinone. Couples the redox reaction to proton translocation, and thus conserves the redox energy in a proton gradient. Cyanobacterial NDH-1 also plays a role in inorganic carbon-concentration. This chain is NAD(P)H-quinone oxidoreductase subunit N, found in Gloeothece citriformis (strain PCC 7424) (Cyanothece sp. (strain PCC 7424)).